Reading from the N-terminus, the 361-residue chain is Cysteine-rich with EGF-like domain protein 2-B (361 aa).

The signal sequence occupies residues Met-1–Ala-24. The region spanning Asp-134–Leu-176 is the EGF-like 1 domain. Disulfide bonds link Cys-138/Cys-152, Cys-146/Cys-164, and Cys-166/Cys-175. An N-linked (GlcNAc...) asparagine glycan is attached at Asn-188. 2 FU repeats span residues His-191 to Pro-238 and Ser-251 to Leu-298. An EGF-like 2; calcium-binding domain is found at Asp-288–Val-329. Disulfide bonds link Cys-292-Cys-306, Cys-299-Cys-315, and Cys-317-Cys-328. Residues Ile-339 to Leu-361 are disordered. Residues Thr-346–Asn-355 are compositionally biased toward polar residues.

Belongs to the CRELD family.

It localises to the secreted. The protein localises to the endoplasmic reticulum. Its function is as follows. Possible role in neuronal acetylcholine receptor transport. The chain is Cysteine-rich with EGF-like domain protein 2-B (creld2-b) from Xenopus laevis (African clawed frog).